We begin with the raw amino-acid sequence, 113 residues long: Gigasin-5 (113 aa).

As to expression, component of the organic matrix of calcified shell layers.

The sequence is that of Gigasin-5 from Magallana gigas (Pacific oyster).